The sequence spans 1364 residues: Collagen alpha-2(I) chain (1364 aa).

Residues 1 to 22 (MLSFVDTRTLLLLAVTSCLATC) form the signal peptide. A Pyrrolidone carboxylic acid modification is found at glutamine 23. The propeptide at 23–79 (QSLQEATARKGPSGDRGPRGERGPPGPPGRDGDDGIPGPPGPPGPPGPPGLGGNFAA) is N-terminal propeptide. The interval 26–1128 (QEATARKGPS…QPRSPTSLRP (1103 aa)) is disordered. Residues 34 to 44 (PSGDRGPRGER) are compositionally biased toward basic and acidic residues. Over residues 59–71 (PGPPGPPGPPGPP) the composition is skewed to pro residues. Glutamine 80 carries the pyrrolidone carboxylic acid modification. Lysine 84 bears the Allysine mark. Residues 93–130 (LMGPRGPPGASGAPGPQGFQGPPGEPGEPGQTGPAGAR) are compositionally biased toward low complexity. 4-hydroxyproline is present on residues proline 100, proline 106, proline 115, proline 118, proline 121, proline 133, proline 136, proline 145, proline 151, proline 166, proline 169, and proline 172. The span at 139-153 (AGEDGHPGKPGRPGE) shows a compositional bias: basic and acidic residues. Position 175 is a 5-hydroxylysine; alternate (lysine 175). Residue lysine 175 is glycosylated (O-linked (Gal...) hydroxylysine; alternate). A 4-hydroxyproline mark is found at proline 190 and proline 193. Lysine 196 is subject to 5-hydroxylysine. 4-hydroxyproline occurs at positions 199, 202, 208, 217, 226, 253, 256, and 259. Residues 223–252 (VGAPGPAGARGSDGSVGPVGPAGPIGSAGP) show a composition bias toward low complexity. Lysine 262 is subject to 5-hydroxylysine. 4-hydroxyproline occurs at positions 271, 286, 295, and 304. Positions 277 to 291 (AGPRGEVGLPGLSGP) are enriched in low complexity. The segment covering 298 to 319 (PGANGLPGAKGAAGLPGVAGAP) has biased composition (low complexity). Lysine 307 carries the 5-hydroxylysine modification. A 4-hydroxyproline mark is found at proline 313, proline 319, proline 322, proline 328, and proline 346. Over residues 328–343 (PGPVGAAGATGARGLV) the composition is skewed to low complexity. 5-hydroxylysine is present on lysine 352. 9 positions are modified to 4-hydroxyproline: proline 361, proline 367, proline 370, proline 391, proline 394, proline 400, proline 406, proline 439, and proline 442. A compositionally biased stretch (low complexity) spans 396–406 (LRGNPGSRGLP). Low complexity-rich tracts occupy residues 468-487 (LPGIDGRPGPIGPAGARGEP) and 511-535 (AGLAGARGAPGPDGNNGAQGPPGLQ). Over residues 536–545 (GVQGGKGEQG) the composition is skewed to gly residues. 4 stretches are compositionally biased toward low complexity: residues 592 to 609 (PGESGAAGPTGPIGSRGP), 621 to 643 (EPGVVGAPGTAGPSGPSGLPGER), 666 to 688 (SPGRDGARGAPGAIGAPGPAGAN), and 715 to 735 (VGPAGPNGFAGPAGAAGQPGA). The segment covering 736 to 745 (KGERGTKGPK) has biased composition (basic and acidic residues). Low complexity predominate over residues 748–763 (NGPVGPTGPVGAAGPS). Positions 773–782 (GSRGDGGPPG) are enriched in gly residues. 5 stretches are compositionally biased toward low complexity: residues 783–793 (ATGFPGAAGRT), 861–874 (PQGLLGAPGFLGLP), 891–930 (EPGPLGIAGPPGARGPPGNVGNPGVNGAPGEAGRDGNPGN), 948–961 (YPGNAGPVGAAGAP), and 978–999 (EPGPAGAVGPAGAVGPRGPSGP). Residues 1003-1014 (RGDKGEPGDKGP) show a composition bias toward basic and acidic residues. Pro residues predominate over residues 1087–1101 (AGPPGPPGPPGPPGP). The propeptide at 1118 to 1364 (DQPRSPTSLR…RLNIGPVCFK (247 aa)) is C-terminal propeptide. The region spanning 1131–1364 (YEVDATLKSL…RLNIGPVCFK (234 aa)) is the Fibrillar collagen NC1 domain. 3 disulfides stabilise this stretch: cysteine 1161–cysteine 1193, cysteine 1201–cysteine 1362, and cysteine 1270–cysteine 1315. Positions 1179, 1181, 1182, 1184, and 1187 each coordinate Ca(2+). Residue asparagine 1265 is glycosylated (N-linked (GlcNAc...) asparagine).

The protein belongs to the fibrillar collagen family. In terms of assembly, trimers of one alpha 2(I) and two alpha 1(I) chains. Interacts (via C-terminus) with TMEM131 (via PapD-L domain); the interaction is direct and is involved in assembly and TRAPPIII ER-to-Golgi transport complex-dependent secretion of collagen. Post-translationally, prolines at the third position of the tripeptide repeating unit (G-X-Y) are hydroxylated in some or all of the chains. Forms the fibrils of tendon, ligaments and bones. In bones the fibrils are mineralized with calcium hydroxyapatite.

It localises to the secreted. Its subcellular location is the extracellular space. The protein localises to the extracellular matrix. Type I collagen is a member of group I collagen (fibrillar forming collagen). The chain is Collagen alpha-2(I) chain (COL1A2) from Bos taurus (Bovine).